A 40-amino-acid polypeptide reads, in one-letter code: Photosystem II reaction center protein J (40 aa).

Residues 8–28 (IPLWMIGTLAGILVISLIGIF) traverse the membrane as a helical segment.

This sequence belongs to the PsbJ family. PSII is composed of 1 copy each of membrane proteins PsbA, PsbB, PsbC, PsbD, PsbE, PsbF, PsbH, PsbI, PsbJ, PsbK, PsbL, PsbM, PsbT, PsbX, PsbY, PsbZ, Psb30/Ycf12, at least 3 peripheral proteins of the oxygen-evolving complex and a large number of cofactors. It forms dimeric complexes.

It is found in the plastid membrane. Its function is as follows. One of the components of the core complex of photosystem II (PSII). PSII is a light-driven water:plastoquinone oxidoreductase that uses light energy to abstract electrons from H(2)O, generating O(2) and a proton gradient subsequently used for ATP formation. It consists of a core antenna complex that captures photons, and an electron transfer chain that converts photonic excitation into a charge separation. This is Photosystem II reaction center protein J from Cuscuta gronovii (Common dodder).